A 276-amino-acid chain; its full sequence is Kallikrein-11 (276 aa).

A signal peptide spans 1–44 (MRRLKSDWKLSTETREPGARPALLQARMILRLIALALVTGHVGG). Positions 45–47 (ETR) are cleaved as a propeptide — activation peptide. The Peptidase S1 domain maps to 48 to 274 (IIKGYECRPH…YFNWIHEVMR (227 aa)). Disulfide bonds link Cys54–Cys189, Cys73–Cys89, Cys168–Cys235, Cys200–Cys214, and Cys225–Cys250. Catalysis depends on His88, which acts as the Charge relay system. Asn125 is a glycosylation site (N-linked (GlcNAc...) asparagine). Asp136 serves as the catalytic Charge relay system. Asn191 and Asn207 each carry an N-linked (GlcNAc...) asparagine glycan. Ser229 acts as the Charge relay system in catalysis. N-linked (GlcNAc...) asparagine glycosylation is present at Asn236.

The protein belongs to the peptidase S1 family. Kallikrein subfamily. As to expression, expressed in brain and prostate (isoform 1) and prostate (isoform 2).

It localises to the secreted. Its function is as follows. Possible multifunctional protease. Efficiently cleaves 'bz-Phe-Arg-4-methylcoumaryl-7-amide', a kallikrein substrate, and weakly cleaves other substrates for kallikrein and trypsin. The protein is Kallikrein-11 (Klk11) of Mus musculus (Mouse).